A 450-amino-acid polypeptide reads, in one-letter code: Divalent metal cation transporter MntH (450 aa).

Transmembrane regions (helical) follow at residues 44–64 (LLAF…PGNW), 77–97 (TLLS…SLAA), 121–141 (FLLW…EVIG), 152–172 (IPLI…LLLM), 181–201 (AFVI…IVAA), 218–238 (IFTN…TVMP), 273–293 (IALM…AATF), 310–330 (LLSP…ALLA), 366–386 (GIAI…GTAD), 387–407 (LLVF…IPLV), and 419–439 (FAIS…IVVL).

It belongs to the NRAMP family.

The protein resides in the cell inner membrane. In terms of biological role, h(+)-stimulated, divalent metal cation uptake system. The chain is Divalent metal cation transporter MntH from Bradyrhizobium diazoefficiens (strain JCM 10833 / BCRC 13528 / IAM 13628 / NBRC 14792 / USDA 110).